A 233-amino-acid polypeptide reads, in one-letter code: MKRAVVVFSGGQDSTTCLVQALQQYDEVHCVTFDYGQRHRAEIDVARELALKLGAVAHKVLDVTLLNELAVSSLTRDNIPVPDYQPDAEGIPNTFVPGRNILFLTLTAIYAYQVKAEAIITGVCETDFSGYPDCRDEFVKALHHAVSLGMAKDIRFETPLMWLNKAETWALADFWGQLDLVRQETLTCYNGIKGDGCGQCAACNLRANGLNQYLGDKVGVMAVMKQKTGLAQA.

Residue 8–18 (FSGGQDSTTCL) participates in ATP binding. Positions 188, 197, 200, and 203 each coordinate Zn(2+).

The protein belongs to the QueC family. The cofactor is Zn(2+).

It catalyses the reaction 7-carboxy-7-deazaguanine + NH4(+) + ATP = 7-cyano-7-deazaguanine + ADP + phosphate + H2O + H(+). It functions in the pathway purine metabolism; 7-cyano-7-deazaguanine biosynthesis. Functionally, catalyzes the ATP-dependent conversion of 7-carboxy-7-deazaguanine (CDG) to 7-cyano-7-deazaguanine (preQ(0)). This Klebsiella pneumoniae (strain 342) protein is 7-cyano-7-deazaguanine synthase.